The chain runs to 77 residues: UPF0337 protein CE0198 (77 aa).

The interval 1 to 77 (MGDLSNKAEG…PDVEHPEAVN (77 aa)) is disordered. Basic and acidic residues-rich tracts occupy residues 30-56 (DEGR…KDGA) and 64-77 (QDKD…EAVN).

The protein belongs to the UPF0337 (CsbD) family.

This is UPF0337 protein CE0198 from Corynebacterium efficiens (strain DSM 44549 / YS-314 / AJ 12310 / JCM 11189 / NBRC 100395).